A 212-amino-acid chain; its full sequence is Vesicle transport protein SFT2C (212 aa).

Residues 1–78 (MADLHRQLQD…TRGQRLVAGG (78 aa)) lie on the Cytoplasmic side of the membrane. The helical transmembrane segment at 79-99 (LCLLLAALCFGLAALYAPVLL) threads the bilayer. Residues 100–104 (LRARK) are Lumenal-facing. The helical transmembrane segment at 105-125 (FALLWSLGSVLAWASAALLRG) threads the bilayer. Topologically, residues 126–142 (GPACGRLLRGEETPSRS) are cytoplasmic. Residues 143–165 (TLGYAAALGATLYAALVLRSTVL) form a helical membrane-spanning segment. At 166 to 174 (TALGACAQV) the chain is on the lumenal side. Residues 175-197 (AALLYALIGLLPWGGVTALRLAL) traverse the membrane as a helical segment. Topologically, residues 198 to 212 (GRLNRGTGLANALPV) are cytoplasmic.

The protein belongs to the SFT2 family.

It localises to the membrane. Functionally, may be involved in fusion of retrograde transport vesicles derived from an endocytic compartment with the Golgi complex. In Mus musculus (Mouse), this protein is Vesicle transport protein SFT2C.